Consider the following 188-residue polypeptide: Pyridoxal 5'-phosphate synthase subunit PdxT (188 aa).

Position 46–48 (46–48 (GES)) interacts with L-glutamine. Cys78 functions as the Nucleophile in the catalytic mechanism. Residues Arg106 and 132–133 (IR) each bind L-glutamine. Active-site charge relay system residues include His169 and Glu171.

Belongs to the glutaminase PdxT/SNO family. In the presence of PdxS, forms a dodecamer of heterodimers. Only shows activity in the heterodimer.

It catalyses the reaction aldehydo-D-ribose 5-phosphate + D-glyceraldehyde 3-phosphate + L-glutamine = pyridoxal 5'-phosphate + L-glutamate + phosphate + 3 H2O + H(+). The catalysed reaction is L-glutamine + H2O = L-glutamate + NH4(+). It functions in the pathway cofactor biosynthesis; pyridoxal 5'-phosphate biosynthesis. Functionally, catalyzes the hydrolysis of glutamine to glutamate and ammonia as part of the biosynthesis of pyridoxal 5'-phosphate. The resulting ammonia molecule is channeled to the active site of PdxS. In Tropheryma whipplei (strain Twist) (Whipple's bacillus), this protein is Pyridoxal 5'-phosphate synthase subunit PdxT.